Reading from the N-terminus, the 256-residue chain is Pimeloyl-[acyl-carrier protein] methyl ester esterase (256 aa).

Residues 15–242 enclose the AB hydrolase-1 domain; it reads HLVLLHGWGL…AAHAPFISHP (228 aa). Residues Trp22, 82-83, and 143-147 each bind substrate; these read SL and FLALQ. Ser82 acts as the Nucleophile in catalysis. Residues Asp207 and His235 contribute to the active site. His235 serves as a coordination point for substrate.

It belongs to the AB hydrolase superfamily. Carboxylesterase BioH family. As to quaternary structure, monomer.

Its subcellular location is the cytoplasm. The enzyme catalyses 6-carboxyhexanoyl-[ACP] methyl ester + H2O = 6-carboxyhexanoyl-[ACP] + methanol + H(+). It participates in cofactor biosynthesis; biotin biosynthesis. In terms of biological role, the physiological role of BioH is to remove the methyl group introduced by BioC when the pimeloyl moiety is complete. It allows to synthesize pimeloyl-ACP via the fatty acid synthetic pathway through the hydrolysis of the ester bonds of pimeloyl-ACP esters. This Escherichia coli O17:K52:H18 (strain UMN026 / ExPEC) protein is Pimeloyl-[acyl-carrier protein] methyl ester esterase.